An 892-amino-acid chain; its full sequence is MAVARSLRSGESGPRTGSEIRTAFLTFFAERAHQVIPSASLVPEDPTVLLTIAGMLPFKPVFMGQAERPAPRATSSQKCIRTNDIENVGRTARHHTFFEMLGNFSFGDYFKQQAIEWAWELSTEVFGLNPKNLVVSVFREDDEAEAIWRDVVGVNPKRIIRMDEADNFWASGPTGPCGPCSEIYYDFKPDLGNDDIDLEDDGRFVEFYNLVFMQYNRDGEGNLTPLANRNIDTGMGLERMAQILQGVPNNYETDIIYPLIETAAGLAGLDYQKLDDKGKTSFKVIGDHCRAITHLICDGVTASNLGRGYIMRRLLRRVVRHGRLVGIEKPFLQAMGEAAIALMVEAYPQLEERRKLILAELNREEARFLETLERGEKVLADVLVANPQMISGGQAFELYDTYGFPLELTQEIAEEHGLTVDLQGFEQAMDQQRQRAKAAAVSIDLTLQGAIEQMAAELEATRFKGYQVLEQPCCVLALVVNGESAERASAGDNVQIVLDTTPFYGESGGQVGDHGVLSGEGSGGNGVIVAVDDVSRHRNVFVHFGRIERGTLALGDLVNAQVDRACRRRAQANHTATHLLQAALKQVVDSGIGQAGSLVDFDRLRFDFHCSRAVTAKELEQIEALINGWIMESHDLIVEEMSIQEAKAAGAVAMFGEKYADVVRVVDVPGVSMELCGGTHVANTAEIGLFKIVAESSVAAGIRRIEAVAGPAVLAYLNERDVVVKELGDRFKAQPSEIIERVISLQEELKSSQKALTAARAELAVAKSAALATQAVAVGEYQLLVARLDGVEGAGLQNAAQGLLDQLGDATAVVLGGLPDPSDEGKVILVAAFGKQVIAQGQQAGKFIGSIAKRCGGGGGGRPNLAQAGGRDGAALDGALEAAKVELKQSLG.

Zn(2+) is bound by residues histidine 574, histidine 578, cysteine 676, and histidine 680.

It belongs to the class-II aminoacyl-tRNA synthetase family. It depends on Zn(2+) as a cofactor.

The protein localises to the cytoplasm. The enzyme catalyses tRNA(Ala) + L-alanine + ATP = L-alanyl-tRNA(Ala) + AMP + diphosphate. In terms of biological role, catalyzes the attachment of alanine to tRNA(Ala) in a two-step reaction: alanine is first activated by ATP to form Ala-AMP and then transferred to the acceptor end of tRNA(Ala). Also edits incorrectly charged Ser-tRNA(Ala) and Gly-tRNA(Ala) via its editing domain. This Prochlorococcus marinus (strain MIT 9303) protein is Alanine--tRNA ligase.